A 391-amino-acid chain; its full sequence is Polyisoprenyl-teichoic acid--peptidoglycan teichoic acid transferase TagV (391 aa).

The Cytoplasmic segment spans residues 1-23; sequence MAERVRVRVRKKKKSKRRKILKR. Residues 24–44 form a helical; Signal-anchor for type II membrane protein membrane-spanning segment; the sequence is IMLLFALALLVVVGLGGYKLY. The Extracellular segment spans residues 45 to 391; sequence KTINAADESY…TTNSTTDSSY (347 aa). The disordered stretch occupies residues 329 to 391; the sequence is DYTPDTSTGT…TTNSTTDSSY (63 aa). Over residues 333 to 391 the composition is skewed to low complexity; the sequence is DTSTGTSGTEDGTDSSSSSGSTGSTGTTTDGTTNGSSYSNDSSTSSNNSTTNSTTDSSY.

This sequence belongs to the LytR/CpsA/Psr (LCP) family.

It is found in the cell membrane. It functions in the pathway cell wall biogenesis. In terms of biological role, may catalyze the final step in cell wall teichoic acid biosynthesis, the transfer of the anionic cell wall polymers (APs) from their lipid-linked precursor to the cell wall peptidoglycan (PG). This is Polyisoprenyl-teichoic acid--peptidoglycan teichoic acid transferase TagV from Bacillus subtilis (strain 168).